The following is a 122-amino-acid chain: Small ribosomal subunit protein uS13 (122 aa).

Residues 93–122 are disordered; sequence RLSLPVRGQRTKTNSRTRKGKRKTVAGKKK. Positions 101 to 122 are enriched in basic residues; the sequence is QRTKTNSRTRKGKRKTVAGKKK.

This sequence belongs to the universal ribosomal protein uS13 family. As to quaternary structure, part of the 30S ribosomal subunit. Forms a loose heterodimer with protein S19. Forms two bridges to the 50S subunit in the 70S ribosome.

Functionally, located at the top of the head of the 30S subunit, it contacts several helices of the 16S rRNA. In the 70S ribosome it contacts the 23S rRNA (bridge B1a) and protein L5 of the 50S subunit (bridge B1b), connecting the 2 subunits; these bridges are implicated in subunit movement. Contacts the tRNAs in the A and P-sites. This Chlamydia abortus (strain DSM 27085 / S26/3) (Chlamydophila abortus) protein is Small ribosomal subunit protein uS13.